The chain runs to 250 residues: Indole-3-glycerol phosphate synthase (250 aa).

Belongs to the TrpC family.

The catalysed reaction is 1-(2-carboxyphenylamino)-1-deoxy-D-ribulose 5-phosphate + H(+) = (1S,2R)-1-C-(indol-3-yl)glycerol 3-phosphate + CO2 + H2O. It participates in amino-acid biosynthesis; L-tryptophan biosynthesis; L-tryptophan from chorismate: step 4/5. This chain is Indole-3-glycerol phosphate synthase, found in Picrophilus torridus (strain ATCC 700027 / DSM 9790 / JCM 10055 / NBRC 100828 / KAW 2/3).